Reading from the N-terminus, the 250-residue chain is Tripartite motif-containing protein 74 (250 aa).

The segment at 16–57 (CPICLEVFKESLMLQCGHSYCKGCLVSLSYHLDTKVRCPMCW) adopts an RING-type zinc-finger fold. A B box-type zinc finger spans residues 84 to 125 (PEPKVCVHHRNPLSLFCEKDQELICGLCGLLGSHQHHPVTPV). 4 residues coordinate Zn(2+): C89, H92, C111, and H117. Coiled coils occupy residues 125 to 169 (VSTV…NESD) and 204 to 235 (LVAS…FGNE).

The protein belongs to the TRIM/RBCC family.

The protein is Tripartite motif-containing protein 74 (TRIM74) of Homo sapiens (Human).